The sequence spans 211 residues: Endo-1,4-beta-xylanase A (211 aa).

An N-terminal signal peptide occupies residues 1-27; that stretch reads MKVTAAFAGLLVTAFAAPVPEPVLVSR. Positions 28-210 constitute a GH11 domain; the sequence is SAGINYVQNY…GAGSASVTIS (183 aa). Catalysis depends on glutamate 106, which acts as the Nucleophile. Cysteines 119 and 138 form a disulfide. Glutamate 197 functions as the Proton donor in the catalytic mechanism.

This sequence belongs to the glycosyl hydrolase 11 (cellulase G) family.

It is found in the secreted. The catalysed reaction is Endohydrolysis of (1-&gt;4)-beta-D-xylosidic linkages in xylans.. Its pathway is glycan degradation; xylan degradation. Endo-1,4-beta-xylanase involved in the hydrolysis of xylan, a major structural heterogeneous polysaccharide found in plant biomass representing the second most abundant polysaccharide in the biosphere, after cellulose. This is Endo-1,4-beta-xylanase A (xynA) from Aspergillus niger.